A 133-amino-acid polypeptide reads, in one-letter code: Interleukin-4 (133 aa).

The first 24 residues, 1–24 (MGLTYQLIPALVCLLAFTSTFVHG), serve as a signal peptide directing secretion. N-linked (GlcNAc...) asparagine glycans are attached at residues Asn-28, Asn-45, Asn-62, Asn-84, Asn-96, and Asn-102. 2 cysteine pairs are disulfide-bonded: Cys-48-Cys-85 and Cys-70-Cys-113.

This sequence belongs to the IL-4/IL-13 family.

Its subcellular location is the secreted. In terms of biological role, participates in at least several B-cell activation processes as well as of other cell types. It is a costimulator of DNA-synthesis. It induces the expression of class II MHC molecules on resting B-cells. It enhances both secretion and cell surface expression of IgE and IgG1. It also regulates the expression of the low affinity Fc receptor for IgE (CD23) on both lymphocytes and monocytes. Positively regulates IL31RA expression in macrophages. Stimulates autophagy in dendritic cells by interfering with mTORC1 signaling and through the induction of RUFY4. The polypeptide is Interleukin-4 (IL4) (Felis catus (Cat)).